Here is a 200-residue protein sequence, read N- to C-terminus: 3-isopropylmalate dehydratase small subunit (200 aa).

It belongs to the LeuD family. LeuD type 1 subfamily. In terms of assembly, heterodimer of LeuC and LeuD.

It catalyses the reaction (2R,3S)-3-isopropylmalate = (2S)-2-isopropylmalate. The protein operates within amino-acid biosynthesis; L-leucine biosynthesis; L-leucine from 3-methyl-2-oxobutanoate: step 2/4. Catalyzes the isomerization between 2-isopropylmalate and 3-isopropylmalate, via the formation of 2-isopropylmaleate. The sequence is that of 3-isopropylmalate dehydratase small subunit from Actinobacillus pleuropneumoniae serotype 7 (strain AP76).